The primary structure comprises 530 residues: Tetrahydroberberine oxidase (530 aa).

A signal peptide spans 1-24 (MSKMASSIFATFSLLSSLLPTSLA). Cys36 and Cys94 are joined by a disulfide. Asn51 carries an N-linked (GlcNAc...) asparagine glycan. One can recognise an FAD-binding PCMH-type domain in the interval 72–246 (TTPKPNFIVT…LAWKIRLVPV (175 aa)). The segment at residues 109-171 (HDFEGLSYVS…GVHAFPAGLC (63 aa)) is a cross-link (6-(S-cysteinyl)-8alpha-(pros-histidyl)-FAD (His-Cys)). An N-linked (GlcNAc...) asparagine glycan is attached at Asn483.

This sequence belongs to the oxygen-dependent FAD-linked oxidoreductase family. FAD serves as cofactor. The FAD cofactor is bound via a bicovalent 6-S-cysteinyl, 8alpha-N1-histidyl FAD linkage.

The catalysed reaction is (S)-canadine + 2 O2 + H(+) = berberine + 2 H2O2. Functionally, catalyzes the oxidation of different tetrahydroprotoberberines, such as (S)-canadine, (S)-scoulerine and (S)-corypalmine. Catalyzes the oxidation of (S)-coreximine and (S)-tetrahydropalmatine. Catalyzes the oxidation of different 1-benzylisoquinoline alkaloids, such as (S)-norreticuline, (S)-nororientaline, (S)-coclaurine and (S)-norisoorientaline. Exhibits strict specificity for the (S)-enantiomer of tetrahydroprotoberbirines and 1-benzylisoquinoline alkaloids. This Berberis wilsoniae (Mrs Wilson's barberry) protein is Tetrahydroberberine oxidase.